A 374-amino-acid polypeptide reads, in one-letter code: Putative zinc finger MYND domain-containing protein R331 (374 aa).

Positions 328, 331, 341, 344, 350, 354, 362, and 366 each coordinate Zn(2+). An MYND-type zinc finger spans residues 328-366; that stretch reads CFYCNKNIEKPVVCNKCFRIKYCSEKCQSEYNSYHSDDC.

The chain is Putative zinc finger MYND domain-containing protein R331 from Acanthamoeba polyphaga (Amoeba).